The chain runs to 217 residues: Lipid transferase CIDEA (217 aa).

The 78-residue stretch at 33–110 (PARPFRVSNH…ILEKGQKWTP (78 aa)) folds into the CIDE-N domain. Positions 163–180 (CTSFKAVLRNLLRFMSYA) are amphipathic helix.

The protein belongs to the CIDE family. Homodimer. Interacts with CIDEC. Directly interacts with CEBPB. Interacts with isoform CLSTN3beta of CLSTN3; inhibiting the lipid transferase activity of CIDEA. In terms of tissue distribution, highly expressed in brown adipose tissue and, at lower levels, in white adipose tissue (at protein level). Undetectable in undifferentiated preadipocytes. Expressed in mammary gland during pregnancy and lactation, in epithelial cells, but not in the surrounding adipose tissue. Secreted into milk via milk fat globules.

Its subcellular location is the lipid droplet. The protein resides in the nucleus. The enzyme catalyses a triacyl-sn-glycerol(in) = a triacyl-sn-glycerol(out). In terms of biological role, lipid transferase that promotes unilocular lipid droplet formation by mediating lipid droplet fusion. Lipid droplet fusion promotes their enlargement, restricting lipolysis and favoring lipid storage. Localizes on the lipid droplet surface, at focal contact sites between lipid droplets, and mediates atypical lipid droplet fusion by promoting directional net neutral lipid transfer from the smaller to larger lipid droplets. The transfer direction may be driven by the internal pressure difference between the contacting lipid droplet pair and occurs at a lower rate than that promoted by CIDEC. May also act as a CEBPB coactivator in epithelial cells to control the expression of a subset of CEBPB downstream target genes, including ID2, IGF1, PRLR, SOCS1, SOCS3, XDH, but not casein. By interacting with CEBPB, strengthens the association of CEBPB with the XDH promoter, increases histone acetylation and dissociates HDAC1 from the promoter. When overexpressed, induces apoptosis; the physiological significance of its role in apoptosis is unclear. The chain is Lipid transferase CIDEA from Mus musculus (Mouse).